The sequence spans 153 residues: Glycosylation-dependent cell adhesion molecule 1 (153 aa).

An N-terminal signal peptide occupies residues 1-18 (MKFLCVLLLASLAATSLA). The O-linked (GalNAc...) threonine; partial glycan is linked to Thr-34. A phosphoserine mark is found at Ser-47, Ser-52, Ser-56, Ser-58, and Ser-64. Ser-78 carries O-linked (HexNAc...) serine glycosylation. An N-linked (GlcNAc...) asparagine glycan is attached at Asn-95. The segment at 95-115 (NATLGSEETTEHTPSDASTTE) is disordered. Thr-104 carries O-linked (GalNAc...) threonine glycosylation.

Belongs to the PP3/GlyCAM-1 family. In terms of tissue distribution, highly and specifically expressed in the lactating mammary gland.

Its subcellular location is the membrane. The protein is Glycosylation-dependent cell adhesion molecule 1 (GLYCAM1) of Bos taurus (Bovine).